We begin with the raw amino-acid sequence, 488 residues long: Eukaryotic translation initiation factor 3 subunit L (488 aa).

Disordered regions lie at residues 1–34 (MSLPQHQNRDAARRAPDDDDDAEEETMANDYREQ) and 427–449 (SEGGLLERRGDPQQRSRLRHGKE). Positions 7–16 (QNRDAARRAP) are enriched in basic and acidic residues. Residues 17 to 27 (DDDDDAEEETM) show a composition bias toward acidic residues. The PCI domain occupies 256–450 (DAIRMFSHIL…RSRLRHGKEI (195 aa)). Over residues 431–440 (LLERRGDPQQ) the composition is skewed to basic and acidic residues.

Belongs to the eIF-3 subunit L family. In terms of assembly, component of the eukaryotic translation initiation factor 3 (eIF-3) complex.

It is found in the cytoplasm. Functionally, component of the eukaryotic translation initiation factor 3 (eIF-3) complex, which is involved in protein synthesis of a specialized repertoire of mRNAs and, together with other initiation factors, stimulates binding of mRNA and methionyl-tRNAi to the 40S ribosome. The eIF-3 complex specifically targets and initiates translation of a subset of mRNAs involved in cell proliferation. The sequence is that of Eukaryotic translation initiation factor 3 subunit L from Phaeosphaeria nodorum (strain SN15 / ATCC MYA-4574 / FGSC 10173) (Glume blotch fungus).